The sequence spans 2698 residues: Chromodomain-helicase-DNA-binding protein 6 (2698 aa).

Composition is skewed to basic and acidic residues over residues 1–12 (MKMKIQKKEKQL), 100–115 (EPGE…DREP), and 122–171 (EPKE…KRSC). Residues 1-243 (MKMKIQKKEK…KRRSGRQVKR (243 aa)) are disordered. Residues 1-746 (MKMKIQKKEK…MMELRKCCNH (746 aa)) form a required for DNA-dependent ATPase activity region. The span at 213–224 (QSLPNPSLQSPE) shows a compositional bias: low complexity. 2 consecutive Chromo domains span residues 291-342 (NIIE…KDPR) and 374-438 (IEID…KPVE). Residues 472-646 (LFNWYNRKNC…FSLLNFLEPS (175 aa)) enclose the Helicase ATP-binding domain. 485–492 (DEMGLGKT) contacts ATP. Residues 597–600 (DEAH) carry the DEAH box motif. The Helicase C-terminal domain occupies 786–955 (LIDKLLPKLI…LSKMEVEDLL (170 aa)). The tract at residues 1318–1370 (SLSAEQGVTDGTSDIPERGNIDKEDSAEDKVDGLQKQTASPSDGSDGIFGEKK) is disordered. Over residues 1320 to 1329 (SAEQGVTDGT) the composition is skewed to polar residues. The span at 1332 to 1350 (IPERGNIDKEDSAEDKVDG) shows a compositional bias: basic and acidic residues. Residues 1435 to 1489 (RWTRREQADFYRTVSSFGVVYDQEKEAFDWTQFRAISRLDKKSDENLEHYFHSFV) enclose the Myb-like domain. Residues 1707 to 1730 (EPRSFQEAPSTNMQSRKKTVTVSA) show a composition bias toward polar residues. The disordered stretch occupies residues 1707–1731 (EPRSFQEAPSTNMQSRKKTVTVSAS). Phosphoserine is present on Ser-1852. 6 disordered regions span residues 1935 to 2046 (GLGS…ASGI), 2111 to 2137 (LPTP…HSFS), 2308 to 2337 (TTLN…QAEK), 2359 to 2387 (PGFG…IGSL), 2538 to 2587 (ASLA…PTIT), and 2626 to 2698 (QGRH…DDTN). Basic and acidic residues-rich tracts occupy residues 1943–1955 (GEKP…DPYR), 1975–1991 (FKLK…ESSE), and 2004–2024 (SEPK…KDGA). Low complexity-rich tracts occupy residues 2117–2127 (SSSAGSRSSLS) and 2315–2336 (PEGP…SQAE). The segment covering 2538 to 2550 (ASLASTKSGASAT) has biased composition (low complexity). A compositionally biased stretch (basic and acidic residues) spans 2552–2573 (KTTEDELSGRDVKADSLVEDKP). 2 stretches are compositionally biased toward polar residues: residues 2578-2587 (FSDQSEPTIT) and 2664-2675 (SDQNCTESSVTV). The span at 2677–2698 (PEREHVAQAREEGLKDSNDDTN) shows a compositional bias: basic and acidic residues.

Belongs to the SNF2/RAD54 helicase family. As to quaternary structure, interacts with NFE2L2; involved in activation of the transcription. May interact with PPARA. Widely expressed.

It localises to the nucleus. The protein localises to the nucleoplasm. It carries out the reaction ATP + H2O = ADP + phosphate + H(+). In terms of biological role, ATP-dependent chromatin-remodeling factor. Regulates transcription by disrupting nucleosomes in a largely non-sliding manner which strongly increases the accessibility of chromatin. Activates transcription of specific genes in response to oxidative stress through interaction with NFE2L2. This is Chromodomain-helicase-DNA-binding protein 6 (Chd6) from Rattus norvegicus (Rat).